We begin with the raw amino-acid sequence, 348 residues long: Protein RecA (348 aa).

Residue 64–71 (GPESSGKT) participates in ATP binding.

The protein belongs to the RecA family. As to quaternary structure, monomer; forms higher-order oligomers. Interacts with RecU. Interacts with DprA (smf). Interacts with RecD2.

The protein localises to the cytoplasm. Its subcellular location is the nucleoid. In terms of biological role, multifunctional protein involved in homologous recombination, DNA repair and competence. Can catalyze the hydrolysis of (d)ATP in the presence of single-stranded (ss)DNA; prefers dATP at least in vitro, catalyzes the dATP-dependent uptake of ssDNA by duplex DNA, and the dATP-dependent hybridization of homologous ssDNA (strand exchange). RecA-ATP cannot catalyze homologous DNA strand exchange; SsbA and DprA activate strand exchange by RecA-ATP. It interacts with LexA causing its activation and leading to its autocatalytic cleavage. Hydrolysis of ATP in the presence of ssDNA is partially inhibited by RecU. Required for DNA transformation; protects transforming DNA from degradation, possibly in combination with DprA. Blocks replication of both leading and lagging strand DNA in the presence of RecO and SsbA; RecD2 is able to overcome this blockage. Functionally, recruited to repair centers (RCs), foci that are the site of double-stranded DNA break(s), after RecN. Concomitant with the appearance of RecO at the RCs, RecA forms threads that extend from RCs toward the opposite cell half, possibly searching for sequence homology along the sister chromosome. The threads disappear after about 2 hours. Thread formation is absolutely dependent on RecJ or AadAB. Thread formation is also dependent on RarA. This is Protein RecA from Bacillus subtilis (strain 168).